The following is a 238-amino-acid chain: Urease accessory protein UreG (238 aa).

The segment covering 1 to 15 (MPPHLIDGEPHDHAH) has biased composition (basic and acidic residues). A disordered region spans residues 1–27 (MPPHLIDGEPHDHAHDRPKRQRTPGEP). Residue 34-41 (GPVGSGKT) participates in GTP binding.

Belongs to the SIMIBI class G3E GTPase family. UreG subfamily. In terms of assembly, homodimer. UreD, UreF and UreG form a complex that acts as a GTP-hydrolysis-dependent molecular chaperone, activating the urease apoprotein by helping to assemble the nickel containing metallocenter of UreC. The UreE protein probably delivers the nickel.

It is found in the cytoplasm. Facilitates the functional incorporation of the urease nickel metallocenter. This process requires GTP hydrolysis, probably effectuated by UreG. The sequence is that of Urease accessory protein UreG from Nocardia farcinica (strain IFM 10152).